The following is an 87-amino-acid chain: Small ribosomal subunit protein uS17 (87 aa).

The protein belongs to the universal ribosomal protein uS17 family. As to quaternary structure, part of the 30S ribosomal subunit.

One of the primary rRNA binding proteins, it binds specifically to the 5'-end of 16S ribosomal RNA. The sequence is that of Small ribosomal subunit protein uS17 from Alkalilimnicola ehrlichii (strain ATCC BAA-1101 / DSM 17681 / MLHE-1).